A 169-amino-acid chain; its full sequence is Alpha-S2-casein-like B (169 aa).

Positions 1 to 15 (MKFIILTCLLAVALA) are cleaved as a signal peptide.

This sequence belongs to the alpha-casein family. Mammary gland specific. Secreted in milk.

The protein localises to the secreted. In terms of biological role, important role in the capacity of milk to transport calcium phosphate. The chain is Alpha-S2-casein-like B (Csn1s2b) from Rattus norvegicus (Rat).